The sequence spans 245 residues: Putative binding protein HI_1525 (245 aa).

The signal sequence occupies residues 1–19; that stretch reads MKKLVAVTSMILTTFSVQA. Molybdate is bound by residues serine 56 and valine 163.

This sequence belongs to the bacterial solute-binding protein ModA family.

It localises to the periplasm. Its function is as follows. Probably involved in the binding-dependent system. This Haemophilus influenzae (strain ATCC 51907 / DSM 11121 / KW20 / Rd) protein is Putative binding protein HI_1525.